Consider the following 221-residue polypeptide: Type 3 secretion system stator protein (221 aa).

This sequence belongs to the SctL stator family. The core secretion machinery of the T3SS is composed of approximately 20 different proteins, including cytoplasmic components, a base, an export apparatus and a needle. This subunit is part of the cytosolic complex. Interacts directly with YscN/SctN (T3SS ATPase) and YscQ/SctQ (the major sorting platform component).

It is found in the cytoplasm. In terms of biological role, component of the type III secretion system (T3SS), also called injectisome, which is used to inject bacterial effector proteins into eukaryotic host cells. Acts as a regulator of the YscN/SctN ATPase activity. The sequence is that of Type 3 secretion system stator protein from Yersinia pestis.